The primary structure comprises 381 residues: Dual-specificity RNA methyltransferase RlmN (381 aa).

Catalysis depends on E95, which acts as the Proton acceptor. Positions 101-339 (DGRRGTLCVS…MTTVRTTRGD (239 aa)) constitute a Radical SAM core domain. C108 and C345 are oxidised to a cystine. Residues C115, C119, and C122 each contribute to the [4Fe-4S] cluster site. Residues 169 to 170 (GE), S201, 223 to 225 (SLH), and N302 each bind S-adenosyl-L-methionine. C345 functions as the S-methylcysteine intermediate in the catalytic mechanism.

The protein belongs to the radical SAM superfamily. RlmN family. It depends on [4Fe-4S] cluster as a cofactor.

Its subcellular location is the cytoplasm. The catalysed reaction is adenosine(2503) in 23S rRNA + 2 reduced [2Fe-2S]-[ferredoxin] + 2 S-adenosyl-L-methionine = 2-methyladenosine(2503) in 23S rRNA + 5'-deoxyadenosine + L-methionine + 2 oxidized [2Fe-2S]-[ferredoxin] + S-adenosyl-L-homocysteine. It catalyses the reaction adenosine(37) in tRNA + 2 reduced [2Fe-2S]-[ferredoxin] + 2 S-adenosyl-L-methionine = 2-methyladenosine(37) in tRNA + 5'-deoxyadenosine + L-methionine + 2 oxidized [2Fe-2S]-[ferredoxin] + S-adenosyl-L-homocysteine. Functionally, specifically methylates position 2 of adenine 2503 in 23S rRNA and position 2 of adenine 37 in tRNAs. m2A2503 modification seems to play a crucial role in the proofreading step occurring at the peptidyl transferase center and thus would serve to optimize ribosomal fidelity. The sequence is that of Dual-specificity RNA methyltransferase RlmN from Alcanivorax borkumensis (strain ATCC 700651 / DSM 11573 / NCIMB 13689 / SK2).